Consider the following 502-residue polypeptide: Exodeoxyribonuclease 7 large subunit (502 aa).

Residues 474 to 495 (SAPSTTKKSAPKPAAPKAPKTP) are compositionally biased toward low complexity. Residues 474–502 (SAPSTTKKSAPKPAAPKAPKTPGEQGSLF) are disordered.

It belongs to the XseA family. In terms of assembly, heterooligomer composed of large and small subunits.

The protein localises to the cytoplasm. The catalysed reaction is Exonucleolytic cleavage in either 5'- to 3'- or 3'- to 5'-direction to yield nucleoside 5'-phosphates.. Functionally, bidirectionally degrades single-stranded DNA into large acid-insoluble oligonucleotides, which are then degraded further into small acid-soluble oligonucleotides. The polypeptide is Exodeoxyribonuclease 7 large subunit (Ruegeria sp. (strain TM1040) (Silicibacter sp.)).